A 712-amino-acid polypeptide reads, in one-letter code: U11/U12 small nuclear ribonucleoprotein 48 kDa protein (712 aa).

The CHHC U11-48K-type zinc-finger motif lies at 98–125 (FVRCPFDSNHFMPPEALFLHSLRCPNTL). Zn(2+) is bound by residues C101, H107, H117, and C121. The disordered stretch occupies residues 562–712 (QSRSPIGNDQ…EDRYIPTEKE (151 aa)). Basic and acidic residues-rich tracts occupy residues 585–595 (KQWKGENRADI), 603–614 (QNSDKVKRHDEY), 629–663 (KHSDRRDDKLRDRRKDKHNDRRDDEFTRTKRHSIE), 672–693 (SSREKSSSDYKTKRDDPYDRRS), and 702–712 (FEDRYIPTEKE).

As to quaternary structure, component of the U11/U12 snRNPs that are part of the U12-type spliceosome. Not found in the major spliceosome.

Its subcellular location is the nucleus. Its function is as follows. Likely involved in U12-type 5' splice site recognition. In Arabidopsis thaliana (Mouse-ear cress), this protein is U11/U12 small nuclear ribonucleoprotein 48 kDa protein (SNRNP48).